We begin with the raw amino-acid sequence, 274 residues long: NADPH-dependent 7-cyano-7-deazaguanine reductase (274 aa).

80 to 82 contributes to the substrate binding site; it reads VES. 82–83 is an NADPH binding site; the sequence is SK. Cysteine 181 serves as the catalytic Thioimide intermediate. The active-site Proton donor is the aspartate 188. 220–221 provides a ligand contact to substrate; that stretch reads HE. 249–250 contacts NADPH; that stretch reads RG.

The protein belongs to the GTP cyclohydrolase I family. QueF type 2 subfamily. As to quaternary structure, homodimer.

The protein resides in the cytoplasm. The enzyme catalyses 7-aminomethyl-7-carbaguanine + 2 NADP(+) = 7-cyano-7-deazaguanine + 2 NADPH + 3 H(+). It functions in the pathway tRNA modification; tRNA-queuosine biosynthesis. In terms of biological role, catalyzes the NADPH-dependent reduction of 7-cyano-7-deazaguanine (preQ0) to 7-aminomethyl-7-deazaguanine (preQ1). This is NADPH-dependent 7-cyano-7-deazaguanine reductase from Burkholderia ambifaria (strain MC40-6).